Reading from the N-terminus, the 426-residue chain is Serine--tRNA ligase (426 aa).

L-serine is bound at residue 229-231; the sequence is TAE. ATP contacts are provided by residues 260–262 and Val-276; that span reads RTE. Glu-283 provides a ligand contact to L-serine. 350 to 353 provides a ligand contact to ATP; sequence EVTS. Thr-386 serves as a coordination point for L-serine.

It belongs to the class-II aminoacyl-tRNA synthetase family. Type-1 seryl-tRNA synthetase subfamily. In terms of assembly, homodimer. The tRNA molecule binds across the dimer.

It is found in the cytoplasm. It carries out the reaction tRNA(Ser) + L-serine + ATP = L-seryl-tRNA(Ser) + AMP + diphosphate + H(+). It catalyses the reaction tRNA(Sec) + L-serine + ATP = L-seryl-tRNA(Sec) + AMP + diphosphate + H(+). The protein operates within aminoacyl-tRNA biosynthesis; selenocysteinyl-tRNA(Sec) biosynthesis; L-seryl-tRNA(Sec) from L-serine and tRNA(Sec): step 1/1. Catalyzes the attachment of serine to tRNA(Ser). Is also able to aminoacylate tRNA(Sec) with serine, to form the misacylated tRNA L-seryl-tRNA(Sec), which will be further converted into selenocysteinyl-tRNA(Sec). In Rhodopirellula baltica (strain DSM 10527 / NCIMB 13988 / SH1), this protein is Serine--tRNA ligase.